The primary structure comprises 427 residues: Stemphyloxin II biosynthesis cluster transcription factor sthR (427 aa).

A DNA-binding region (zn(2)-C6 fungal-type) is located at residues 15 to 45; the sequence is CDRCRKQKLRCPPDKDDMGTCGRCLRAGVAC. Residues 51–70 are disordered; that stretch reads KPRGRSQKHGISTDGTSHVS. Polar residues predominate over residues 59–69; it reads HGISTDGTSHV.

It is found in the nucleus. Functionally, transcription factor that regulates the expression of the gene cluster that mediates the biosynthesis of the phytotoxin stemphyloxin II. The protein is Stemphyloxin II biosynthesis cluster transcription factor sthR of Phaeosphaeria nodorum (strain SN15 / ATCC MYA-4574 / FGSC 10173) (Glume blotch fungus).